Reading from the N-terminus, the 194-residue chain is dCTP deaminase (194 aa).

DCTP is bound by residues arginine 110 to arginine 115, aspartate 128, valine 136 to glutamate 138, tyrosine 171, lysine 178, and glutamine 182. Glutamate 138 serves as the catalytic Proton donor/acceptor. Residues tyrosine 171–serine 194 form a disordered region.

The protein belongs to the dCTP deaminase family. Homotrimer.

It catalyses the reaction dCTP + H2O + H(+) = dUTP + NH4(+). It participates in pyrimidine metabolism; dUMP biosynthesis; dUMP from dCTP (dUTP route): step 1/2. Its function is as follows. Catalyzes the deamination of dCTP to dUTP. The sequence is that of dCTP deaminase from Shewanella amazonensis (strain ATCC BAA-1098 / SB2B).